Reading from the N-terminus, the 246-residue chain is Adenosylcobinamide-GDP ribazoletransferase (246 aa).

7 helical membrane-spanning segments follow: residues 30-50, 51-71, 105-125, 131-151, 167-189, 193-210, and 226-246; these read VNWY…VHQA, GLVL…WVYV, VGAM…GAVA, GWGS…LLSI, ISSG…AGWY, LQVM…LWFS, and GAVI…SWWL.

Belongs to the CobS family. Mg(2+) is required as a cofactor.

Its subcellular location is the cell membrane. It catalyses the reaction alpha-ribazole + adenosylcob(III)inamide-GDP = adenosylcob(III)alamin + GMP + H(+). The catalysed reaction is alpha-ribazole 5'-phosphate + adenosylcob(III)inamide-GDP = adenosylcob(III)alamin 5'-phosphate + GMP + H(+). The protein operates within cofactor biosynthesis; adenosylcobalamin biosynthesis; adenosylcobalamin from cob(II)yrinate a,c-diamide: step 7/7. Functionally, joins adenosylcobinamide-GDP and alpha-ribazole to generate adenosylcobalamin (Ado-cobalamin). Also synthesizes adenosylcobalamin 5'-phosphate from adenosylcobinamide-GDP and alpha-ribazole 5'-phosphate. The polypeptide is Adenosylcobinamide-GDP ribazoletransferase (Brevibacillus brevis (strain 47 / JCM 6285 / NBRC 100599)).